Reading from the N-terminus, the 193-residue chain is N-(5'-phosphoribosyl)anthranilate isomerase (193 aa).

It belongs to the TrpF family.

It catalyses the reaction N-(5-phospho-beta-D-ribosyl)anthranilate = 1-(2-carboxyphenylamino)-1-deoxy-D-ribulose 5-phosphate. It participates in amino-acid biosynthesis; L-tryptophan biosynthesis; L-tryptophan from chorismate: step 3/5. This chain is N-(5'-phosphoribosyl)anthranilate isomerase, found in Streptococcus mutans serotype c (strain ATCC 700610 / UA159).